Here is an 816-residue protein sequence, read N- to C-terminus: uncharacterized protein (816 aa).

Disordered regions lie at residues 1 to 34, 65 to 101, 154 to 406, and 770 to 816; these read MLFN…QQES, RQNN…GYKN, DEKD…ENPE, and RQHK…VMYA. The segment covering 18 to 32 has biased composition (low complexity); sequence NQSSANTQNQQAHQQ. Over residues 83-92 the composition is skewed to polar residues; the sequence is VSATSAYSKQ. Low complexity predominate over residues 161–223; that stretch reads TTTSSSTSTS…STSTTSTSTT (63 aa). Polar residues predominate over residues 246-260; it reads ESTSIGKGTADSAQI. Residue Ser286 is modified to Phosphoserine. Positions 292-316 are enriched in basic and acidic residues; that stretch reads DEQKEEKSDVKKVNPPSGEEKKEVE. Over residues 317–326 the composition is skewed to acidic residues; the sequence is AEGDAEEETE. Residues 327–342 show a composition bias toward low complexity; the sequence is QSSAEESAERTSTPET. Ser343 and Ser347 each carry phosphoserine. The span at 343–353 shows a compositional bias: acidic residues; that stretch reads SEPESEEDESP. Low complexity predominate over residues 380-396; that stretch reads KSPTSSSTQKSKTAAPS. 2 stretches are compositionally biased toward basic and acidic residues: residues 770-792 and 799-816; these read RQHK…DRSQ and PKDD…VMYA. Residue Thr809 is modified to Phosphothreonine.

In terms of processing, pyrophosphorylated by 5-diphosphoinositol pentakisphosphate (5-IP7). Serine pyrophosphorylation is achieved by Mg(2+)-dependent, but enzyme independent transfer of a beta-phosphate from a inositol pyrophosphate to a pre-phosphorylated serine residue.

This is an uncharacterized protein from Saccharomyces cerevisiae (strain ATCC 204508 / S288c) (Baker's yeast).